The primary structure comprises 958 residues: Glycine dehydrogenase (decarboxylating) 2 (958 aa).

K707 is subject to N6-(pyridoxal phosphate)lysine.

The protein belongs to the GcvP family. As to quaternary structure, the glycine cleavage system is composed of four proteins: P, T, L and H. Pyridoxal 5'-phosphate serves as cofactor.

The enzyme catalyses N(6)-[(R)-lipoyl]-L-lysyl-[glycine-cleavage complex H protein] + glycine + H(+) = N(6)-[(R)-S(8)-aminomethyldihydrolipoyl]-L-lysyl-[glycine-cleavage complex H protein] + CO2. Its function is as follows. The glycine cleavage system catalyzes the degradation of glycine. The P protein binds the alpha-amino group of glycine through its pyridoxal phosphate cofactor; CO(2) is released and the remaining methylamine moiety is then transferred to the lipoamide cofactor of the H protein. The chain is Glycine dehydrogenase (decarboxylating) 2 (gcvP2) from Pseudomonas aeruginosa (strain ATCC 15692 / DSM 22644 / CIP 104116 / JCM 14847 / LMG 12228 / 1C / PRS 101 / PAO1).